The following is a 353-amino-acid chain: tRNA N6-adenosine threonylcarbamoyltransferase (353 aa).

Residues His-109 and His-113 each coordinate Fe cation. Residues 136–140, Asp-169, Gly-182, Asp-186, and Asn-284 contribute to the substrate site; that span reads TVSGG. Residue Asp-312 coordinates Fe cation.

The protein belongs to the KAE1 / TsaD family. The cofactor is Fe(2+).

The protein localises to the cytoplasm. It catalyses the reaction L-threonylcarbamoyladenylate + adenosine(37) in tRNA = N(6)-L-threonylcarbamoyladenosine(37) in tRNA + AMP + H(+). Functionally, required for the formation of a threonylcarbamoyl group on adenosine at position 37 (t(6)A37) in tRNAs that read codons beginning with adenine. Is involved in the transfer of the threonylcarbamoyl moiety of threonylcarbamoyl-AMP (TC-AMP) to the N6 group of A37, together with TsaE and TsaB. TsaD likely plays a direct catalytic role in this reaction. This chain is tRNA N6-adenosine threonylcarbamoyltransferase, found in Chlorobium limicola (strain DSM 245 / NBRC 103803 / 6330).